The sequence spans 2575 residues: MRSLAQEGNRLLVFGPQALSAKGNDFRALQAKVAQLTWITHVITDLPNVWGDFVKEFPKYSLVSGETLLQKLIKWVDTGDIDLGTNNHLANIILSPLVIITHITEYLKYLQNGAPKTNHESSTETLGFCMGFLSALVVSVSNDSIDIERYGAAAIRLAMIIGGIVDAQDGLDAQGPSKSLATAWNSTKAAEELQQILVHFPEAYVSVSYDDQRATITTASKTVSTLQGQLRTAGIVANEIGLFGRFHNDWYAEDVDEIIDFVSSRPELVLPDATDLIYQTRSNSGTGLITSGKLHDHAIRTILVQHSNWYQTFKSIHDTQIKSLKTSVIAFGPEPCVPPSILREIKQNVIHASDIQAESIAPPPIVLPQQVKEDDIAVVGMSLKVAGADDTDEFWDLLCAGQSQHREVPRNRIKFDNDWREVGPKRKYFGNFLNDHDIFDQKFFKKSAREAASTDPQQRILLHVAYQALEQAGYFNSPEQDKRIGCFIGECANDYADNVACHQPNAFTATGNLKSFIAGKVSHYFGWTGTGLTLDTACSSSLVAVHLACKAILSGECNAALAGGVNMMNSALWFQNLAAASFLSPTGQCKPFDANADGYCRGEAVGVVFLKSMSAAIANGDQIIGTISSTGVSQNQNCTPIFVPNAPSLSTLFQDVIQDAQVDPKKISVVEAHGTGTQVGDPAEYDSIRRVLGGANLRSKPLAFGSVKGLVGHTEASSGLVSLIKILLMIQNKTIPPQASHESLNPHLNATADDKMEIITKKTTWDEDYRAALINNYGASGSNASAVVTEAPRLHESTTSATSFPVLDYPFHIFGKDDRAIRDYCTKLAKSLEAKGVNNLSIANLSFNICRQSNPTLDRGLVFTSRSVKELVEKLNAFQTGDVNVAATIVQPQLRPVVLCFGGQISTYVGLSKEVYENVRILARYLDQCDYACQSLGCESIFPGIFQRSPIEDTVKLQTMLFSIQYACGKSWIDSGVQPVAVVGHSFGELTSLCISGVLSLEYALKMIVGRATIIRESWGSEKGAMMAIEADQEEVQKLLAETSLPCEEAGQRAPTIACLNGPRSFTIAGSSRAIDIAGETISKNPAYSRFRFKKLNVTNAFHSTLVEPLMSDLEKVGQSLQFNEPSIHLERATEFYSSERLAARYVADHMRNPVFFNHAVQRISKKYPDAIFVEAGSNSTITNMASRALGSPVASHFQPVNITTDNGLQLLVDSTASLWKQGLMVPFWAHSRVQTYEYSPVFLPAYQFEKLRHWMEPVPPPTSSKQVVGGQAEEPKGLWSFIDYMDEKKRGARFRINTETDKYKELVSGHIIAQTAPICPATVEVDIAVEALISLYSNFATSGLQPRICNVDNQSPICIDSSRSVWLDVESQESAPNNWSWRIVSTGESSKASTVHVTGQIIFVSTDNAEWQLEFSRYERLIGHQRCVGLLNCDDADDIIQGRNIYRSFGEVVDYSAPYRGLQKLVGKGTESAGRVVKKYTGDSWLDALLSDAFSQVGGIWVNCMTDKDPGDMYIATGFEKWMRSPDITTDYKRPEAWDVFAYHQELPLEHSYLTDIFIFDSTNGKLTEVILGVNYHKVAKATMSKILARLSGLPTTSTSTNVKSSPAAAEGSSPVENGASGSGSKAKKTKSGAGQDVVNKTKGLLAEISGMGVEEISNEAQLADIGIDSLMGMELARELEGMFKCTLPSDELMNVTDFAGLVQIIKSTLGVSDDEEGSDQEGSEASSSESSTTFTPSTTATTVSDVEDNGNEKSIGKEKSVSYTGDLQLPSSTIIEAFEESRKLTDDFIANYRCADYMETVLPRQTQLCVALTVEAFEQLGCPIRSAKAGDILTRIPHDPQHQRLTNYLHKMLEEEARLIDTDGSKITRTAIAPPSKSSDAILEQLLRDFPDHEWANKLTHFAGSRLADVLKGECDGIKLIFGSDEGRRLVTGLYGDSLLNKLANVQMQDIVARVASKMPQDQGPLKILELGAGTGGTTKGMVALLAKLGVPVEYTFTDLSGSFVAAARKTFKEYPFMKYKVHDIEKSPPADLVGTQHIIIASNAMHATHNLEISTANVRKALRPDGFLMMLEMTSPVFWVDLIFGLFEGWWLFDDGREHAIGHQTLWERIMRAAGYGHIDWTDGNSPELEIQRVIIALASGPQYDRQPVAPLPQPEKQLQPAAGRKAAVDEYVRKYTEGFSLGERVERATSPSQYEQCVLITGATGSLGSHLVAHVAALPNVKTVVCLNRRSGSDANARQQKALEDRGILIDAASQSKLQVFQVTTSKPLLGLEKSDYEELLGKVTHIVHNAWPMTGKRPLSGLESQFQVMRNLIDFARDISAHRSKGSKVTLQLISSIAVVGHYPLWSGNVEVPEERMTLESVLPNGYGDAKFVCERMLEETLHKYPEQFRVMSVRPGQIAGSKVTGYWNAMEHLSFLFKSSQTLKVLPDFEGDLCWTPVDDVAGTCSDLLISDREPYLVYHIDNPVRQPWKEMIPLLAELLDIPRTNIVPFKEWVRRVRAFPGSVEWDNPAALLIDFLDDNFLRMSCGGLLLGTAKSCEHSPTLAAVGPVSVEVTKKYIQSWKNSGFLHK.

Residues 89-228 enclose the Starter acyltransferase (SAT) domain; that stretch reads LANIILSPLV…ASKTVSTLQG (140 aa). The active-site Nucleophile; for transacylase activity is the C129. The active-site Proton donor/acceptor; for transacylase activity is H247. The region spanning 373-790 is the Ketosynthase family 3 (KS3) domain; that stretch reads EDDIAVVGMS…GSNASAVVTE (418 aa). Catalysis depends on for beta-ketoacyl synthase activity residues C538, H673, and H713. Residues 901–1192 form the Malonyl-CoA:ACP transacylase (MAT) domain; it reads FGGQISTYVG…TNMASRALGS (292 aa). An N-terminal hotdog fold region spans residues 1276-1409; sequence PKGLWSFIDY…GQIIFVSTDN (134 aa). The 311-residue stretch at 1276 to 1586 folds into the PKS/mFAS DH domain; that stretch reads PKGLWSFIDY…YHKVAKATMS (311 aa). A product template (PT) domain region spans residues 1307–1584; the sequence is LVSGHIIAQT…VNYHKVAKAT (278 aa). The Proton acceptor; for dehydratase activity role is filled by H1311. Residues 1437–1586 are C-terminal hotdog fold; the sequence is ADDIIQGRNI…YHKVAKATMS (150 aa). The Proton donor; for dehydratase activity role is filled by D1493. Over residues 1597-1606 the composition is skewed to polar residues; it reads TTSTSTNVKS. The segment at 1597–1636 is disordered; that stretch reads TTSTSTNVKSSPAAAEGSSPVENGASGSGSKAKKTKSGAG. The Carrier domain occupies 1637–1711; it reads QDVVNKTKGL…GLVQIIKSTL (75 aa). The residue at position 1671 (S1671) is an O-(pantetheine 4'-phosphoryl)serine. Residues 1713 to 1762 are disordered; that stretch reads VSDDEEGSDQEGSEASSSESSTTFTPSTTATTVSDVEDNGNEKSIGKEKS. The span at 1714–1724 shows a compositional bias: acidic residues; sequence SDDEEGSDQEG. A compositionally biased stretch (low complexity) spans 1725-1746; it reads SEASSSESSTTFTPSTTATTVS. Positions 1752 to 1762 are enriched in basic and acidic residues; it reads GNEKSIGKEKS. The methyltransferase domain stretch occupies residues 1835–2130; it reads LTRIPHDPQH…HIDWTDGNSP (296 aa). Positions 2204–2448 constitute a Thioester reductase (TE) domain; that stretch reads ITGATGSLGS…LCWTPVDDVA (245 aa).

Pantetheine 4'-phosphate serves as cofactor.

It functions in the pathway secondary metabolite biosynthesis. Non-reducing polyketide synthase; part of the gene cluster that mediates the biosynthesis of mitorubrinol and mitorubrinic acid, two virulence factors that improve T.marneffei intracellular survival in macrophages. The two polyketide synthases pks12 and pks11 are probably responsible for sequential use in the biosynthesis of mitorubrinol and mitorubrinic acid. The first part of the biosynthesis is probably catalyzed by pks12, which synthesized orsellinic acid. This tetraketide is then used as a starter unit for pks11, which possesses a SAT domain, in the second part of the biosynthesis. Pks11, contains a methyltransferase domain, also served that methylates the products, using a methyl group from S-adenosylmethionine. This is Non-reducing polyketide synthase pks11 from Talaromyces marneffei (Penicillium marneffei).